An 88-amino-acid chain; its full sequence is Protein WIR1A (88 aa).

The Cytoplasmic segment spans residues 1 to 13 (MASLGSSAGGRRP). A helical transmembrane segment spans residues 14 to 35 (TVLLQIALFVVVAAIIINSSVC). Residues 36-88 (LGATAVHDAAASGTGALDPNVPAVPTPGGAGQPYTGRGCRTVYGCRPPAGGQP) lie on the Extracellular side of the membrane.

The protein localises to the membrane. Its function is as follows. Associated with pathogen defense. The sequence is that of Protein WIR1A (WIR1A) from Triticum aestivum (Wheat).